The sequence spans 130 residues: Small ribosomal subunit protein uS9 (130 aa).

The protein belongs to the universal ribosomal protein uS9 family.

This chain is Small ribosomal subunit protein uS9, found in Bacillus thuringiensis subsp. konkukian (strain 97-27).